The primary structure comprises 112 residues: Putative pterin-4-alpha-carbinolamine dehydratase (112 aa).

Belongs to the pterin-4-alpha-carbinolamine dehydratase family.

The catalysed reaction is (4aS,6R)-4a-hydroxy-L-erythro-5,6,7,8-tetrahydrobiopterin = (6R)-L-erythro-6,7-dihydrobiopterin + H2O. The protein is Putative pterin-4-alpha-carbinolamine dehydratase of Shewanella denitrificans (strain OS217 / ATCC BAA-1090 / DSM 15013).